Consider the following 369-residue polypeptide: Methionine import ATP-binding protein MetN 1 (369 aa).

Residues 29–265 enclose the ABC transporter domain; it reads IRLHGLGKRY…PRHAVTRSLL (237 aa). 62-69 is an ATP binding site; it reads GRSGAGKS.

It belongs to the ABC transporter superfamily. Methionine importer (TC 3.A.1.24) family. The complex is composed of two ATP-binding proteins (MetN), two transmembrane proteins (MetI) and a solute-binding protein (MetQ).

The protein resides in the cell inner membrane. It carries out the reaction L-methionine(out) + ATP + H2O = L-methionine(in) + ADP + phosphate + H(+). It catalyses the reaction D-methionine(out) + ATP + H2O = D-methionine(in) + ADP + phosphate + H(+). Part of the ABC transporter complex MetNIQ involved in methionine import. Responsible for energy coupling to the transport system. In Pseudomonas aeruginosa (strain ATCC 15692 / DSM 22644 / CIP 104116 / JCM 14847 / LMG 12228 / 1C / PRS 101 / PAO1), this protein is Methionine import ATP-binding protein MetN 1.